Consider the following 201-residue polypeptide: MSRYRGPRLKIIRRLRTLPGLTNKRPKSRNDPTNQSSSRKISQYRIRPEEKQKLRFHYGLTERQLLKYVRIAGRAKGSTGQILLQLLEMRLDNIIFRLGMALTIPGARQLVNHRHILVNDRVVDIPSYRCKPRDVITIIDQRRSRAMIGKNLDLSQKDQMPNHLTLHSSQYKGLVNQIIDSKWISLKINELLVVEYYSRQA.

The interval G20 to Q43 is disordered. A compositionally biased stretch (polar residues) spans D31–I41. The S4 RNA-binding domain occupies M89–K157.

It belongs to the universal ribosomal protein uS4 family. As to quaternary structure, part of the 30S ribosomal subunit. Contacts protein S5. The interaction surface between S4 and S5 is involved in control of translational fidelity.

The protein localises to the plastid. It localises to the chloroplast. One of the primary rRNA binding proteins, it binds directly to 16S rRNA where it nucleates assembly of the body of the 30S subunit. Functionally, with S5 and S12 plays an important role in translational accuracy. The polypeptide is Small ribosomal subunit protein uS4c (rps4) (Cycas taitungensis (Prince sago)).